The primary structure comprises 331 residues: UPF0194 membrane protein YbhG (331 aa).

The first 19 residues, 1–19, serve as a signal peptide directing secretion; the sequence is MKKPVVIGLAIAAIVAVIA. Residues 107-208 are a coiled coil; sequence EEIAQAAAAV…LDLQDTTLIA (102 aa).

It belongs to the UPF0194 family.

It localises to the periplasm. The sequence is that of UPF0194 membrane protein YbhG from Salmonella agona (strain SL483).